A 125-amino-acid chain; its full sequence is MGFWKFPPFLVLSILVLYQAGMFHAAPFRSVFDGRFDPATLDEEESRLLLAAMVNDYEQMRTRESEKAQKTEGSRIQKRACNTATCMTHRLAGWLSRSGSMVRSNLLPTKMGFKIFSGPRRNFWF.

The signal sequence occupies residues Met1–Ala25. Residues Ala26 to Gln77 constitute a propeptide that is removed on maturation. Residues Cys81 and Cys86 are joined by a disulfide bond.

The protein belongs to the calcitonin family.

Its subcellular location is the secreted. In terms of biological role, stimulates cAMP production via the calcitonin receptor (CT) but not via the CT-like (CL) receptor. This is Calcitonin receptor-stimulating peptide 1 (CRSP1) from Ovis aries (Sheep).